We begin with the raw amino-acid sequence, 305 residues long: MEFAGKRLKGLIAATFTPMTSNSDINLPVIKQYVDYLVQKQHVRNIFVNGTTGEGMSLSVQERKCLAEEWVKQARGKMDNVIIHVGCLSLSDSKDLAAHAASCGADAISIVCPSFLKPSSLDALVLYMKEVAFAAPSLPFYYYHIPRLTGTTYQICELLRKAKENIPSFRGVKFTDVNLMDFGLCVSQYKEFDCLYGVDEQLLGALAFGAHGAVGSTYNYLGKKNGDMMAAFEGGNLQEARKIQCSLQEFLLFVFDMGWGLPEFKDIMSQISGIPLGPPRLPLYSSVKSDHHDSIRTKMLKLDLI.

2 residues coordinate aceneuramate: Thr-51 and Thr-52. The active-site Proton donor is Tyr-143. Lys-173 acts as the Schiff-base intermediate with substrate in catalysis. Residues Thr-175, Gly-197, Asp-199, Glu-200, and Ser-216 each coordinate aceneuramate.

Belongs to the DapA family. NanA subfamily. In terms of assembly, homotetramer.

The protein resides in the cytoplasm. It catalyses the reaction aceneuramate = aldehydo-N-acetyl-D-mannosamine + pyruvate. Its pathway is amino-sugar metabolism; N-acetylneuraminate degradation. In terms of biological role, catalyzes the cleavage of N-acetylneuraminic acid (sialic acid) to form pyruvate and N-acetylmannosamine via a Schiff base intermediate. It prevents sialic acids from being recycled and returning to the cell surface. Involved in the N-glycolylneuraminic acid (Neu5Gc) degradation pathway. The polypeptide is N-acetylneuraminate lyase (Xenopus tropicalis (Western clawed frog)).